The chain runs to 220 residues: MARRPARCYRYCKNKPYPKSRYNRAVPDAKIRIYDLGRKKATVDEFPLCIHLVSNELEQLSSEALEAARICANKYITKVSGRDSFHLRVRVHPFHVLRINKMLSCAGADRLQQGMRGAWGKPHGLAARVSIGQIIMSARTKDSNKDVVIEGLRRARYKFPGQQKIIISKKWGFTPLNRDEYIAKKTNGEVIDDGAYVKFLSRKGNLEANLQQFPNYQYSA.

This sequence belongs to the universal ribosomal protein uL16 family. In terms of assembly, component of the large ribosomal subunit. Mature ribosomes consist of a small (40S) and a large (60S) subunit. The 40S subunit contains about 32 different proteins and 1 molecule of RNA (18S). The 60S subunit contains 45 different proteins and 3 molecules of RNA (25S, 5.8S and 5S).

The protein resides in the cytoplasm. In terms of biological role, component of the ribosome, a large ribonucleoprotein complex responsible for the synthesis of proteins in the cell. The small ribosomal subunit (SSU) binds messenger RNAs (mRNAs) and translates the encoded message by selecting cognate aminoacyl-transfer RNA (tRNA) molecules. The large subunit (LSU) contains the ribosomal catalytic site termed the peptidyl transferase center (PTC), which catalyzes the formation of peptide bonds, thereby polymerizing the amino acids delivered by tRNAs into a polypeptide chain. The nascent polypeptides leave the ribosome through a tunnel in the LSU and interact with protein factors that function in enzymatic processing, targeting, and the membrane insertion of nascent chains at the exit of the ribosomal tunnel. This chain is Large ribosomal subunit protein uL16, found in Candida albicans (strain SC5314 / ATCC MYA-2876) (Yeast).